Reading from the N-terminus, the 305-residue chain is Target of rapamycin complex subunit LST8-1 (305 aa).

WD repeat units lie at residues 1 to 30 (MSQP…CYRT), 33 to 71 (YPDS…PQPV), 76 to 115 (SHTN…CQKE), 117 to 156 (ESVA…CSCE), 160 to 199 (EVDT…QTMT), 209 to 248 (AHNG…LEKV), and 251 to 292 (GHQR…KVYQ).

Belongs to the WD repeat LST8 family. In terms of assembly, the target of rapamycin complex 1 (TORC1) is composed of at least RAPTOR, LST8 and TOR. Interacts with TOR. Expressed in the root central cylinder, root tips, emerging lateral roots, vasculature of cotyledons, leaf stomata, leaf stipules, anthers, pollen, filaments, and vasculature of petals and sepals.

The protein resides in the endosome. Functionally, component of TORC1 complex, which is an essential cell growth regulator that controls plant development. Acts by activating transcription, protein synthesis and ribosome biogenesis, and inhibiting mRNA degradation and autophagy. Involved in regulating amino acid accumulation and the synthesis of myo-inositol and raffinose during plant adaptation to long days. Involved in the regulation of plant growth and abscisic acid (ABA) accumulation. Acts as a positive regulation of the ABA biosynthetic genes ZEP, NCED3 and AAO3, and negative regulator of the ABA catabolic genes CYP707A2 and CYP707A3. The sequence is that of Target of rapamycin complex subunit LST8-1 from Arabidopsis thaliana (Mouse-ear cress).